The chain runs to 235 residues: Glycerol-3-phosphate acyltransferase (235 aa).

The next 6 membrane-spanning stretches (helical) occupy residues 4-24 (LIVI…IIAG), 56-76 (AVTL…VVFF), 90-110 (VALR…TVFA), 126-146 (FGIA…TIFV), 152-172 (VASI…KYLF), and 191-211 (IHDS…FAII).

It belongs to the PlsY family. Probably interacts with PlsX.

It is found in the cell inner membrane. The catalysed reaction is an acyl phosphate + sn-glycerol 3-phosphate = a 1-acyl-sn-glycero-3-phosphate + phosphate. Its pathway is lipid metabolism; phospholipid metabolism. In terms of biological role, catalyzes the transfer of an acyl group from acyl-phosphate (acyl-PO(4)) to glycerol-3-phosphate (G3P) to form lysophosphatidic acid (LPA). This enzyme utilizes acyl-phosphate as fatty acyl donor, but not acyl-CoA or acyl-ACP. The protein is Glycerol-3-phosphate acyltransferase of Prosthecochloris aestuarii (strain DSM 271 / SK 413).